The primary structure comprises 229 residues: MKKIKIGLMGSAGRMGQEIAGVIEANPRCELVYAPLRGEKWDSKKAQAVDVWIDFTSPEALKDILKKASETKTPVVCGTTGFSKKEKELLKTYSKKIPVLWSSNMSLGVAVLNEALKAFSAISHFDFQIEEIHHNRKKDRPSGTAITLQENLEKAVDKKLPEALAIRGGGVFGVHKIFAMSDEEVLTFEHTALNRTVFAKGSVQAAEWLVKQKPGLYQIRDVLFGKSKK.

NAD(+)-binding positions include 10-15, 78-80, and 102-105; these read GSAGRM, GTT, and SSNM. H133 (proton donor/acceptor) is an active-site residue. Residue H134 coordinates (S)-2,3,4,5-tetrahydrodipicolinate. K137 serves as the catalytic Proton donor. 143–144 contributes to the (S)-2,3,4,5-tetrahydrodipicolinate binding site; that stretch reads GT.

It belongs to the DapB family.

The protein localises to the cytoplasm. It catalyses the reaction (S)-2,3,4,5-tetrahydrodipicolinate + NAD(+) + H2O = (2S,4S)-4-hydroxy-2,3,4,5-tetrahydrodipicolinate + NADH + H(+). The catalysed reaction is (S)-2,3,4,5-tetrahydrodipicolinate + NADP(+) + H2O = (2S,4S)-4-hydroxy-2,3,4,5-tetrahydrodipicolinate + NADPH + H(+). It functions in the pathway amino-acid biosynthesis; L-lysine biosynthesis via DAP pathway; (S)-tetrahydrodipicolinate from L-aspartate: step 4/4. Its function is as follows. Catalyzes the conversion of 4-hydroxy-tetrahydrodipicolinate (HTPA) to tetrahydrodipicolinate. This Bdellovibrio bacteriovorus (strain ATCC 15356 / DSM 50701 / NCIMB 9529 / HD100) protein is 4-hydroxy-tetrahydrodipicolinate reductase.